We begin with the raw amino-acid sequence, 588 residues long: Probable G-protein coupled receptor 162 (588 aa).

Residues 1-17 (MARGGAGAEEASLRSNA) are Extracellular-facing. A helical transmembrane segment spans residues 18 to 38 (LSWLACGLLALLANAWIILSI). Topologically, residues 39–49 (SAKQQKHKPLE) are cytoplasmic. Residues 50 to 70 (LLLCFLAGTHILMAAVPLTTF) traverse the membrane as a helical segment. The Extracellular portion of the chain corresponds to 71-91 (AVVQLRRQASSDYDWNESICK). Asn86 carries N-linked (GlcNAc...) asparagine glycosylation. Residues 92 to 112 (VFVSTYYTLALATCFTVASLS) traverse the membrane as a helical segment. The Cytoplasmic segment spans residues 113–133 (YHRMWMVRWPVNYRLSNAKKQ). A helical transmembrane segment spans residues 134 to 154 (ALHAVMGIWMVSFILSTLPSI). Residues 155 to 174 (GWHNNGERYYARGCQFIVSK) lie on the Extracellular side of the membrane. The helical transmembrane segment at 175-195 (IGLGFGVCFSLLLLGGIVMGL) threads the bilayer. Residues 196 to 275 (VCVAITFYQT…SLQVTNLVSA (80 aa)) are Cytoplasmic-facing. Residues 276–296 (IVFLYDSLTGVPILVVSFFSL) form a helical membrane-spanning segment. The Extracellular segment spans residues 297-303 (KSDSAPP). The chain crosses the membrane as a helical span at residues 304–324 (WMVLAVLWCSMAQTLLLPSFI). Residues 325–588 (WSCERYRADV…GNPIFPQLTL (264 aa)) are Cytoplasmic-facing. A phosphoserine mark is found at Ser413 and Ser435. 2 disordered regions span residues 445 to 474 (QSRALGGPPEYLGQRHRLEDEEDEEEAEGG) and 511 to 550 (ETPLPSPTASPGHSPRRPRPLGLSPRRLSLGSPESRAVGL). A compositionally biased stretch (low complexity) spans 530 to 546 (PLGLSPRRLSLGSPESR).

Belongs to the G-protein coupled receptor 1 family.

It localises to the cell membrane. Its function is as follows. Orphan receptor. The sequence is that of Probable G-protein coupled receptor 162 (GPR162) from Homo sapiens (Human).